The primary structure comprises 191 residues: Fe/S biogenesis protein NfuA (191 aa).

[4Fe-4S] cluster is bound by residues Cys149 and Cys152.

The protein belongs to the NfuA family. Homodimer. The cofactor is [4Fe-4S] cluster.

Functionally, involved in iron-sulfur cluster biogenesis. Binds a 4Fe-4S cluster, can transfer this cluster to apoproteins, and thereby intervenes in the maturation of Fe/S proteins. Could also act as a scaffold/chaperone for damaged Fe/S proteins. The protein is Fe/S biogenesis protein NfuA of Sodalis glossinidius (strain morsitans).